A 545-amino-acid polypeptide reads, in one-letter code: Lysine--tRNA ligase (545 aa).

Residues 41–49 (PSGVPHLGH) carry the 'HIGH' region motif. Positions 306-310 (ALSSS) match the 'KMSKS' region motif.

It belongs to the class-I aminoacyl-tRNA synthetase family.

It localises to the cytoplasm. It carries out the reaction tRNA(Lys) + L-lysine + ATP = L-lysyl-tRNA(Lys) + AMP + diphosphate. The chain is Lysine--tRNA ligase from Natronomonas pharaonis (strain ATCC 35678 / DSM 2160 / CIP 103997 / JCM 8858 / NBRC 14720 / NCIMB 2260 / Gabara) (Halobacterium pharaonis).